Consider the following 566-residue polypeptide: Protein OBERON 1 (566 aa).

The span at 1 to 10 (MGTSSGSNLP) shows a compositional bias: polar residues. The interval 1–79 (MGTSSGSNLP…KTGPDSHDQH (79 aa)) is disordered. A compositionally biased stretch (low complexity) spans 18–29 (QQLQTSLSLVSS). The segment covering 47–60 (ESASSQETWPTSKS) has biased composition (polar residues). A compositionally biased stretch (basic and acidic residues) spans 64–79 (RKTDSGKTGPDSHDQH). The PHD-type zinc-finger motif lies at 225–289 (LCMCVICNKF…LFKCRACNHT (65 aa)). A coiled-coil region spans residues 407–522 (EEKTRMYKKA…LFEKIKEQES (116 aa)). The segment at 545–566 (YNASSPRVDPRSNQRNPFRSNP) is disordered. Over residues 555-566 (RSNQRNPFRSNP) the composition is skewed to polar residues.

As to quaternary structure, self-interacts. Interacts with OBE2, OBE3 and OBE4. Binds to VPg of pea seed borne mosaic virus (PSbMV), turnip mosaic virus (TuMV) and lettuce mosaic virus (LMV), but not with VPg of tobacco etch virus (TEV), cowpea mosaic virus (CPMV), tomato black ring virus (TBRV) and grapevine fan leaf virus (GFLV). Interacts with RBL. In terms of tissue distribution, expressed in roots, seedlings, stems, leaves, flowers and siliques, especially in the vasculature.

Its subcellular location is the nucleus. The protein localises to the nucleoplasm. Probable transcription factor that acts together with OBE2 for the maintenance and/or establishment of both the shoot and root meristems, probably by controlling the expression of the meristem genes such as WUS, PLT1 and PLT2 and of genes required for auxin responses. Promotes cell meristematic activity via the WUSCHEL-CLAVATA pathway. Involved in the development of the basal pole and in auxin-mediated root and vascular development in the embryo. Confers sensitivity to turnip mosaic virus (TuMV) probably by promoting viral movement and multiplication via interaction with TuMV VPg. In Arabidopsis thaliana (Mouse-ear cress), this protein is Protein OBERON 1.